Reading from the N-terminus, the 821-residue chain is uncharacterized protein (821 aa).

Disordered stretches follow at residues 1–20 (MGQT…TTSS), 55–96 (SENY…EAYS), 134–205 (SYDF…NNEH), 240–263 (RLHQ…RSSW), 274–293 (PEEF…TPLN), 360–381 (NVLQ…ESNS), 430–450 (TSED…NESR), 467–497 (EFST…SQAF), 512–535 (RNLF…NQPT), and 549–641 (AQEP…SNQT). Composition is skewed to polar residues over residues 58–88 (YADT…CSTQ) and 185–203 (SLPS…SINN). The segment covering 279 to 293 (NASNPEAHSNFTPLN) has biased composition (polar residues). A compositionally biased stretch (polar residues) spans 437–450 (TMTQENQSLHNESR). Composition is skewed to low complexity over residues 517–529 (TSNS…SSFS) and 568–578 (SSLLDSSNSNS). Polar residues predominate over residues 579-622 (QRPFSTVPSESNVFSRNASGNFSMSQTHQPTTDNTSSFSTQPGR). An RING-type; atypical zinc finger spans residues 766–809 (CLICLETYTNGDICRKLQACKHFFHQACIDQWLTTGNNSCPLCR).

This is an uncharacterized protein from Schizosaccharomyces pombe (strain 972 / ATCC 24843) (Fission yeast).